A 77-amino-acid chain; its full sequence is uncharacterized protein (77 aa).

This is an uncharacterized protein from Acidianus ambivalens (Desulfurolobus ambivalens).